The chain runs to 491 residues: UDP-N-acetylmuramate--L-alanine ligase (491 aa).

126 to 132 (GTHGKTT) is an ATP binding site.

It belongs to the MurCDEF family.

Its subcellular location is the cytoplasm. It catalyses the reaction UDP-N-acetyl-alpha-D-muramate + L-alanine + ATP = UDP-N-acetyl-alpha-D-muramoyl-L-alanine + ADP + phosphate + H(+). It functions in the pathway cell wall biogenesis; peptidoglycan biosynthesis. Its function is as follows. Cell wall formation. This chain is UDP-N-acetylmuramate--L-alanine ligase, found in Yersinia enterocolitica serotype O:8 / biotype 1B (strain NCTC 13174 / 8081).